We begin with the raw amino-acid sequence, 513 residues long: ATP synthase subunit alpha 1 (513 aa).

Residue 169–176 coordinates ATP; sequence GDRQTGKT.

This sequence belongs to the ATPase alpha/beta chains family. In terms of assembly, F-type ATPases have 2 components, CF(1) - the catalytic core - and CF(0) - the membrane proton channel. CF(1) has five subunits: alpha(3), beta(3), gamma(1), delta(1), epsilon(1). CF(0) has three main subunits: a(1), b(2) and c(9-12). The alpha and beta chains form an alternating ring which encloses part of the gamma chain. CF(1) is attached to CF(0) by a central stalk formed by the gamma and epsilon chains, while a peripheral stalk is formed by the delta and b chains.

It localises to the cell inner membrane. The enzyme catalyses ATP + H2O + 4 H(+)(in) = ADP + phosphate + 5 H(+)(out). In terms of biological role, produces ATP from ADP in the presence of a proton gradient across the membrane. The alpha chain is a regulatory subunit. The sequence is that of ATP synthase subunit alpha 1 from Nitrosomonas eutropha (strain DSM 101675 / C91 / Nm57).